The following is a 221-amino-acid chain: PKHD-type hydroxylase PMT_0286 (221 aa).

One can recognise a Fe2OG dioxygenase domain in the interval 80-174 (HIHGVMFSRS…RLVCVGWIQS (95 aa)). Residues H98, D100, and H155 each coordinate Fe cation. R165 contacts 2-oxoglutarate.

Requires Fe(2+) as cofactor. It depends on L-ascorbate as a cofactor.

The sequence is that of PKHD-type hydroxylase PMT_0286 from Prochlorococcus marinus (strain MIT 9313).